Consider the following 239-residue polypeptide: Large ribosomal subunit protein uL1 (239 aa).

This sequence belongs to the universal ribosomal protein uL1 family. Part of the 50S ribosomal subunit.

In terms of biological role, binds directly to 23S rRNA. The L1 stalk is quite mobile in the ribosome, and is involved in E site tRNA release. Protein L1 is also a translational repressor protein, it controls the translation of the L11 operon by binding to its mRNA. This is Large ribosomal subunit protein uL1 from Rickettsia rickettsii (strain Iowa).